The sequence spans 304 residues: MSTRTEAVKAYLLDLQDRICTALEQEDGNAHFVEDAWTRPAGGGGRTRVIENGAVIEKGGVNFSHVFGSNLPPSASAHRPELAGRGFEALGVSLVIHPHNPHVPTSHANVRFFIAEKEGEEPVWWFGGGFDLTPYYGVEEDCVHWHRVAERACAPFGDDVYPRYKAWCDSYFHLKHRDEPRGIGGLFFDDVNQWDFDTSFAFIRAIGDAFINAYLPIVRRRKAAAYTAQQREFQEFRRGRYVEFNLVYDRGTLFGLQSGGRTESILMSLPPQVRWGYDWKAAPGSEEARLTEYFLTDRDWLADN.

Ser93 contributes to the substrate binding site. Positions 97 and 107 each coordinate a divalent metal cation. Catalysis depends on His107, which acts as the Proton donor. 109–111 (NVR) is a substrate binding site. Residues His146 and His176 each coordinate a divalent metal cation. Positions 241–276 (YVEFNLVYDRGTLFGLQSGGRTESILMSLPPQVRWG) are important for dimerization. 259–261 (GGR) contributes to the substrate binding site.

It belongs to the aerobic coproporphyrinogen-III oxidase family. In terms of assembly, homodimer. A divalent metal cation is required as a cofactor.

It localises to the cytoplasm. It catalyses the reaction coproporphyrinogen III + O2 + 2 H(+) = protoporphyrinogen IX + 2 CO2 + 2 H2O. Its pathway is porphyrin-containing compound metabolism; protoporphyrin-IX biosynthesis; protoporphyrinogen-IX from coproporphyrinogen-III (O2 route): step 1/1. Its function is as follows. Involved in the heme biosynthesis. Catalyzes the aerobic oxidative decarboxylation of propionate groups of rings A and B of coproporphyrinogen-III to yield the vinyl groups in protoporphyrinogen-IX. The chain is Oxygen-dependent coproporphyrinogen-III oxidase from Pseudomonas savastanoi pv. phaseolicola (strain 1448A / Race 6) (Pseudomonas syringae pv. phaseolicola (strain 1448A / Race 6)).